A 278-amino-acid polypeptide reads, in one-letter code: Glucosamine-6-phosphate deaminase (278 aa).

Aspartate 72 serves as the catalytic Proton acceptor; for enolization step. Aspartate 141 (for ring-opening step) is an active-site residue. Histidine 143 serves as the catalytic Proton acceptor; for ring-opening step. Glutamate 148 serves as the catalytic For ring-opening step.

Belongs to the glucosamine/galactosamine-6-phosphate isomerase family. Homohexamer.

It localises to the cytoplasm. The catalysed reaction is alpha-D-glucosamine 6-phosphate + H2O = beta-D-fructose 6-phosphate + NH4(+). Its pathway is nucleotide-sugar biosynthesis; UDP-N-acetyl-alpha-D-glucosamine biosynthesis; alpha-D-glucosamine 6-phosphate from D-fructose 6-phosphate: step 1/1. In terms of biological role, catalyzes the reversible conversion of alpha-D-glucosamine 6-phosphate (GlcN-6P) into beta-D-fructose 6-phosphate (Fru-6P) and ammonium ion, a regulatory reaction step in de novo uridine diphosphate-N-acetyl-alpha-D-glucosamine (UDP-GlcNAc) biosynthesis via hexosamine pathway. The protein is Glucosamine-6-phosphate deaminase (Gnpda1) of Aedes aegypti (Yellowfever mosquito).